A 78-amino-acid chain; its full sequence is Apolipoprotein C-I (78 aa).

An N-terminal signal peptide occupies residues 1-26 (MRLILWLPVLVVVLLMVLEGPAPAQG).

This sequence belongs to the apolipoprotein C1 family.

The protein localises to the secreted. Inhibitor of lipoprotein binding to the low density lipoprotein (LDL) receptor, LDL receptor-related protein, and very low density lipoprotein (VLDL) receptor. Associates with high density lipoproteins (HDL) and the triacylglycerol-rich lipoproteins in the plasma and makes up about 10% of the protein of the VLDL and 2% of that of HDL. Appears to interfere directly with fatty acid uptake and is also the major plasma inhibitor of cholesteryl ester transfer protein (CETP). Binds free fatty acids and reduces their intracellular esterification. Modulates the interaction of APOE with beta-migrating VLDL and inhibits binding of beta-VLDL to the LDL receptor-related protein. The protein is Apolipoprotein C-I (APOC1) of Puma concolor (Mountain lion).